The primary structure comprises 183 residues: 2-C-methyl-D-erythritol 2,4-cyclodiphosphate synthase (183 aa).

Asp8 and His10 together coordinate a divalent metal cation. 4-CDP-2-C-methyl-D-erythritol 2-phosphate contacts are provided by residues 8–10 (DVH) and 34–35 (HS). His42 is an a divalent metal cation binding site. 4-CDP-2-C-methyl-D-erythritol 2-phosphate-binding positions include 56 to 58 (DIG), 61 to 65 (FPDTD), 132 to 135 (TTEE), and Phe139.

Belongs to the IspF family. In terms of assembly, homotrimer. It depends on a divalent metal cation as a cofactor.

It carries out the reaction 4-CDP-2-C-methyl-D-erythritol 2-phosphate = 2-C-methyl-D-erythritol 2,4-cyclic diphosphate + CMP. Its pathway is isoprenoid biosynthesis; isopentenyl diphosphate biosynthesis via DXP pathway; isopentenyl diphosphate from 1-deoxy-D-xylulose 5-phosphate: step 4/6. Its function is as follows. Involved in the biosynthesis of isopentenyl diphosphate (IPP) and dimethylallyl diphosphate (DMAPP), two major building blocks of isoprenoid compounds. Catalyzes the conversion of 4-diphosphocytidyl-2-C-methyl-D-erythritol 2-phosphate (CDP-ME2P) to 2-C-methyl-D-erythritol 2,4-cyclodiphosphate (ME-CPP) with a corresponding release of cytidine 5-monophosphate (CMP). The sequence is that of 2-C-methyl-D-erythritol 2,4-cyclodiphosphate synthase from Lachnospira eligens (strain ATCC 27750 / DSM 3376 / VPI C15-48 / C15-B4) (Eubacterium eligens).